Consider the following 252-residue polypeptide: MFKVVICDDERIIREGLKQIIPWGDYHFNTIYTAKDGVEALSLIQQHQPELVITDIRMPRKNGVDLLNDIAHLDCNVIILSSYDDFEYMKAGIQHHVLDYLLKPVDHAQLEVILGRLVRTLLEQQSQNGRSLAPCHDAFQPLLKVEYDDYYVNQIVDQIKQSYQTKVTVSDLIQHIDVSESYAMRTFKDHVGITIVDYLNRYRILQSLQLLDRHYKHYEIADKVGFSEYKMFSYHFKKYLQMSPSDYCKQAK.

Positions 3 to 118 (KVVICDDERI…QLEVILGRLV (116 aa)) constitute a Response regulatory domain. Asp55 is subject to 4-aspartylphosphate. Residues 153-250 (NQIVDQIKQS…QMSPSDYCKQ (98 aa)) form the HTH araC/xylS-type domain. 2 DNA-binding regions (H-T-H motif) span residues 170 to 191 (SDLI…KDHV) and 217 to 240 (HYEI…KKYL).

Post-translationally, phosphorylated by HptS.

The protein resides in the cytoplasm. Its function is as follows. Member of the two-component regulatory system HptS/HptR that regulates genes involved in hexose phosphate transport system in response to changes in extracellular phosphate sources. Activates uhpT expression to facilitate glucose-6-phosphate/G6P utilization by directly binding to its promoter. Antagonizes CcpA-dependent transcription of a subset of CcpA-regulated genes involved in antibiotic susceptibility. This chain is Transcriptional regulatory protein HptR (hptR), found in Staphylococcus aureus (strain MRSA252).